Here is a 264-residue protein sequence, read N- to C-terminus: Hydroxyethylthiazole kinase (264 aa).

M52 serves as a coordination point for substrate. Positions 127 and 173 each coordinate ATP. G200 serves as a coordination point for substrate.

It belongs to the Thz kinase family. It depends on Mg(2+) as a cofactor.

It carries out the reaction 5-(2-hydroxyethyl)-4-methylthiazole + ATP = 4-methyl-5-(2-phosphooxyethyl)-thiazole + ADP + H(+). The protein operates within cofactor biosynthesis; thiamine diphosphate biosynthesis; 4-methyl-5-(2-phosphoethyl)-thiazole from 5-(2-hydroxyethyl)-4-methylthiazole: step 1/1. In terms of biological role, catalyzes the phosphorylation of the hydroxyl group of 4-methyl-5-beta-hydroxyethylthiazole (THZ). This is Hydroxyethylthiazole kinase from Serratia proteamaculans (strain 568).